The chain runs to 479 residues: Cardiolipin synthase A (479 aa).

A run of 2 helical transmembrane segments spans residues 8-28 and 38-58; these read FFGYLIGLIHLLGIIAALHAV and IAWALSLLFIPYFTLIPYLIF. 2 consecutive PLD phosphodiesterase domains span residues 218-245 and 392-419; these read VNFRNHRKIVVVDGLRGFLGGHNVGDEY and QPGFLHQKVVLVDDEVSAIGSANLDNRS. Residues His223, Lys225, Asp230, His397, Lys399, and Asp404 contribute to the active site.

Belongs to the phospholipase D family. Cardiolipin synthase subfamily. ClsA sub-subfamily.

Its subcellular location is the cell inner membrane. It catalyses the reaction 2 a 1,2-diacyl-sn-glycero-3-phospho-(1'-sn-glycerol) = a cardiolipin + glycerol. Its function is as follows. Catalyzes the reversible phosphatidyl group transfer from one phosphatidylglycerol molecule to another to form cardiolipin (CL) (diphosphatidylglycerol) and glycerol. The chain is Cardiolipin synthase A from Pseudomonas entomophila (strain L48).